The primary structure comprises 424 residues: Tol-Pal system protein TolB (424 aa).

Residues Met-1 to Ala-16 form the signal peptide.

The protein belongs to the TolB family. In terms of assembly, the Tol-Pal system is composed of five core proteins: the inner membrane proteins TolA, TolQ and TolR, the periplasmic protein TolB and the outer membrane protein Pal. They form a network linking the inner and outer membranes and the peptidoglycan layer.

Its subcellular location is the periplasm. Its function is as follows. Part of the Tol-Pal system, which plays a role in outer membrane invagination during cell division and is important for maintaining outer membrane integrity. The sequence is that of Tol-Pal system protein TolB from Ruthia magnifica subsp. Calyptogena magnifica.